The primary structure comprises 1449 residues: MELRSDASHKENVSPKPAALPKPEQRRFRRSLGIGLSGRHDQWVPGCQVERGGPAATPSPGAVLDQEPCRVQTNLASPGPRLGLALKDTTGQLVNSSFWQQSNLQSLARRRQGKAREFAIQQSNLSINETSSPHLCPEPGGSSGPHKLPWGPLLSQEPLARPSSCLRQSGLPAPGTPSGDFRPTEAFAPLDGHTQPGLRSWGGLGSWRSRLVGEPLTLEDLAVPSQNQTQAPSRAAVHQLLASVHCLAQEAARLRCQAPQEPPGAVQQDLWTGGGQPFSAHPQPSQPVLASSDGRRRRLRGHRETAAFLETPASLSDSWAQSKLMSPETTLGTRTKDSLNPEQGLPPAHPLGSGDSCSPWSQDGRAQRGDPSLPRGVGSRGTDPCSSAFSNTAWGVSPKQKGEEGAPRERVHREEERTAFHLSDTVPASSASKNKAQNITAPESEAICWQLLSRCFRSWRHLVKRQREPAAAAVALGRWQLLRKCLQALWLREAQLEAAWGQYTKVLLVRSFREWRNLALQQKQVQPHMQAGPGSPPSRRAQGKGLSLGRSTVVDPAQRSRLEHTSPGSLREEEIAQRLLSHPRQRTDSRHERVQILQALQLAVFFLWCQQKKRARQERETLRKATRATQRTGSFPQAWHSTAAGVAWVAPLSPQHQRAWLCRCFGAWQQFVQRGSRYRDHLADRRTGTLRKCLEQWVRMKQLRESDGAKVTQLSLCRQKAGREAVYTAGPGACGLGAVGQAQGQQEQGRGSLQDACWTLALCWALLLWKMRLFQRQWANSFFQGLQQRMLQRSLRWWHLRALGPDATSSCTKTPSALEPLSSSTLQDSLEKVPRAPTLPDTLQGSLLWAAGQRQQGQCLLLWQARAQQFQGTARWYQHTRQRRIFLSWSRWATAQWAWRELASHRAWDRTCRAVLGLWRQRLLQSRLVEWWAQERGWRLARDALCHWHSCWQGQQFLHEKCQTWVQVHLQGLQKVVFRSWQQAAAHQRCTVTRPEQLLLQSYFQAWCEVVRDTGVLRAQHQAFQDGLRRRALGAVFATWREAQEVAAGAQEQRVAQASLARWRSCGQQGQEDGQQKKARAPQAFPAWPVAPGMHHEAQQQAGESAGAQAAQCWTWCWALWVHESCRGQVSRAHASWKPRAWVLEASVQSAVRGGVQRAILTQLRPAELRRFLRTVQLRVRLGLPGAGKTRSCWTQATELVPPAPSLQCSLGGRRKPRGTAWAQRCREHSLCPAFQLWPQWPGQSSWVPGLPLWTRDQGPRAHSSPEPRACKAQSKAHKRRLRARSCRILEKQAQAHGSALLLALKGHDALGHQEEVPAAPVPRGTASRAAGFPAGQVPGSGMAALGGCPRGRAAGADPAQGVAPEMGLADVVAADPATASGSAVTAAGRWAFKKWHQRLAARSPRRGAASSPRPWSKPGPKGPESGQEAARAPRGWGLGAEHGAQLQL.

Residues M1–V13 are compositionally biased toward basic and acidic residues. Disordered regions lie at residues M1–L32, S123–W201, A258–R298, L315–Q437, K523–S551, D1257–H1278, and R1399–L1449. Positions S123–P133 are enriched in polar residues. Polar residues-rich tracts occupy residues L315–T333 and P384–W394. Residues Q400–A419 show a composition bias toward basic and acidic residues. Polar residues predominate over residues V426 to Q437. A compositionally biased stretch (basic and acidic residues) spans Q1258–A1270.

This is an uncharacterized protein from Homo sapiens (Human).